Reading from the N-terminus, the 312-residue chain is Sulfate adenylyltransferase subunit 2 (312 aa).

Belongs to the PAPS reductase family. CysD subfamily. Heterodimer composed of CysD, the smaller subunit, and CysN.

It catalyses the reaction sulfate + ATP + H(+) = adenosine 5'-phosphosulfate + diphosphate. The protein operates within sulfur metabolism; hydrogen sulfide biosynthesis; sulfite from sulfate: step 1/3. Functionally, with CysN forms the ATP sulfurylase (ATPS) that catalyzes the adenylation of sulfate producing adenosine 5'-phosphosulfate (APS) and diphosphate, the first enzymatic step in sulfur assimilation pathway. APS synthesis involves the formation of a high-energy phosphoric-sulfuric acid anhydride bond driven by GTP hydrolysis by CysN coupled to ATP hydrolysis by CysD. This is Sulfate adenylyltransferase subunit 2 from Methylobacterium nodulans (strain LMG 21967 / CNCM I-2342 / ORS 2060).